The chain runs to 273 residues: NAD(P)H-hydrate epimerase (273 aa).

Residues 52 to 260 (AQQIDQELFN…GIIQKYELNL (209 aa)) form the YjeF N-terminal domain. 105-109 (NNGGD) lines the (6S)-NADPHX pocket. K(+) contacts are provided by Asn-106 and Asp-170. Residues 174-180 (GFSFKGE) and Asp-203 each bind (6S)-NADPHX. K(+) is bound at residue Ser-206.

It belongs to the NnrE/AIBP family. The cofactor is K(+).

The catalysed reaction is (6R)-NADHX = (6S)-NADHX. The enzyme catalyses (6R)-NADPHX = (6S)-NADPHX. In terms of biological role, catalyzes the epimerization of the S- and R-forms of NAD(P)HX, a damaged form of NAD(P)H that is a result of enzymatic or heat-dependent hydration. This is a prerequisite for the S-specific NAD(P)H-hydrate dehydratase to allow the repair of both epimers of NAD(P)HX. In Branchiostoma floridae (Florida lancelet), this protein is NAD(P)H-hydrate epimerase.